Reading from the N-terminus, the 1163-residue chain is Ankyrin repeat-containing protein F37A4.4 (1163 aa).

The ANK repeat unit spans residues 856 to 885 (YGNTALHVATRRGYQNLVEILIKHGADRSF). The region spanning 929–1025 (LCVPEKFPVS…KLIEKDCDYL (97 aa)) is the BRCT domain.

The sequence is that of Ankyrin repeat-containing protein F37A4.4 from Caenorhabditis elegans.